The primary structure comprises 448 residues: Probable glycine dehydrogenase (decarboxylating) subunit 1 (448 aa).

It belongs to the GcvP family. N-terminal subunit subfamily. The glycine cleavage system is composed of four proteins: P, T, L and H. In this organism, the P 'protein' is a heterodimer of two subunits.

It carries out the reaction N(6)-[(R)-lipoyl]-L-lysyl-[glycine-cleavage complex H protein] + glycine + H(+) = N(6)-[(R)-S(8)-aminomethyldihydrolipoyl]-L-lysyl-[glycine-cleavage complex H protein] + CO2. Its function is as follows. The glycine cleavage system catalyzes the degradation of glycine. The P protein binds the alpha-amino group of glycine through its pyridoxal phosphate cofactor; CO(2) is released and the remaining methylamine moiety is then transferred to the lipoamide cofactor of the H protein. The sequence is that of Probable glycine dehydrogenase (decarboxylating) subunit 1 from Thermomicrobium roseum (strain ATCC 27502 / DSM 5159 / P-2).